We begin with the raw amino-acid sequence, 343 residues long: Anthranilate phosphoribosyltransferase (343 aa).

Residues G85, 88-89, T93, 95-98, 113-121, and A125 each bind 5-phospho-alpha-D-ribose 1-diphosphate; these read GD, NIST, and KHGGRSVSS. Residue G85 coordinates anthranilate. S97 is a Mg(2+) binding site. An anthranilate-binding site is contributed by R171. Positions 230 and 231 each coordinate Mg(2+).

The protein belongs to the anthranilate phosphoribosyltransferase family. Homodimer. The cofactor is Mg(2+).

It carries out the reaction N-(5-phospho-beta-D-ribosyl)anthranilate + diphosphate = 5-phospho-alpha-D-ribose 1-diphosphate + anthranilate. It functions in the pathway amino-acid biosynthesis; L-tryptophan biosynthesis; L-tryptophan from chorismate: step 2/5. Functionally, catalyzes the transfer of the phosphoribosyl group of 5-phosphorylribose-1-pyrophosphate (PRPP) to anthranilate to yield N-(5'-phosphoribosyl)-anthranilate (PRA). This chain is Anthranilate phosphoribosyltransferase, found in Aromatoleum aromaticum (strain DSM 19018 / LMG 30748 / EbN1) (Azoarcus sp. (strain EbN1)).